Here is a 1955-residue protein sequence, read N- to C-terminus: 227 kDa spindle- and centromere-associated protein (1955 aa).

4 coiled-coil regions span residues 82-129 (KKRI…NDDV), 152-317 (EWAS…ELES), 385-1747 (VRNI…LIAL), and 1770-1813 (ERIV…ERFI). Disordered stretches follow at residues 1865-1896 (PTEQ…SYTY) and 1912-1955 (MTSS…TFSE). A compositionally biased stretch (polar residues) spans 1878 to 1896 (RTSSTIKSSEGTTRESYTY). The span at 1938 to 1948 (RKSRPATRKQQ) shows a compositional bias: basic residues.

The protein resides in the cytoplasm. The protein localises to the cytoskeleton. It is found in the microtubule organizing center. Its subcellular location is the centrosome. It localises to the chromosome. The protein resides in the centromere. The protein localises to the kinetochore. It is found in the spindle. In terms of biological role, may play a role in the organization of the spindle apparatus and its interaction with the centromeres. This chain is 227 kDa spindle- and centromere-associated protein (PUMA1), found in Parascaris univalens (Nematode worm).